A 148-amino-acid polypeptide reads, in one-letter code: Transcriptional regulator MraZ (148 aa).

SpoVT-AbrB domains follow at residues 5-53 and 82-125; these read ETAI…VEKE and SALL…SEQA.

It belongs to the MraZ family. In terms of assembly, forms oligomers.

Its subcellular location is the cytoplasm. It localises to the nucleoid. In Xylella fastidiosa (strain 9a5c), this protein is Transcriptional regulator MraZ.